The following is a 186-amino-acid chain: MLVYVCLVVILIQLPFGAAGGAALGVIAKVSVDAALQQIDDVWKENTVRYWKCAVENRSTKTLYALGTTQESGSMSTIFADIPPQSTGVFVWEKSRGAATGAAGVVHYEYDNKILSIMASIPYDWNLYSAWANVHLSDHKKGFSDLYNGKNGARYPTRAGNWGNVDGTKFFLTDKSHAEFKVIFSG.

A signal peptide spans 1–21; sequence MLVYVCLVVILIQLPFGAAGG. Positions 158 to 160 match the Cell attachment site motif; that stretch reads RAG.

The protein belongs to the actinoporin family. HALT subfamily. Octamer or nonamer in membranes. Monomer in the soluble state. In vitro, interacts with folate receptor alpha (of target organism). As to expression, expressed female germline during oogenesis.

The protein localises to the nematocyst. It localises to the secreted. The protein resides in the target cell membrane. Its function is as follows. Pore-forming protein that forms hydrophilic pores and causes cytolysis. Compared to equinatoxin-2 (AC P61914), it reveals lower cytolysis activity (5-12-fold difference, tested on erythrocytes), a larger pore size (probably 2-3 nm) and different affinity to membrane lipids (100-fold lower affinity to sphingomyelin). Binds to sulfatides. Shows cytolytic activity on HeLa cells, with a different potency than its paralogs (from most potent to less potent: HALT-4&gt;HALT-6~HALT-1&gt;HALT-3&gt;HALT-7&gt;HALT-2). Pore formation is a multi-step process that involves specific recognition of membrane lipid by a protein aromatic residues rich region, firm binding to the membrane (mainly driven by hydrophobic interactions) accompanied by the transfer of the N-terminal region to the lipid-water interface and finally pore formation after oligomerization of monomers. In vitro, binds to the folate receptor alpha (FOLR1), a GPI-anchored membrane protein that plays a major role in the uptake of folate/folic acid into cells via endocytosis, suggesting a possible involvement of this receptor in the mechanism of HALT-1-induced cell lysis. In vivo, does not cause visible paralysis in larvae of the blowfly Sarcophaga faculata, the most common arthropod prey of Hydra. In Hydra vulgaris (Hydra), this protein is Hydra actinoporin-like toxin 6.